Here is a 1345-residue protein sequence, read N- to C-terminus: Mediator of RNA polymerase II transcription subunit 13 (1345 aa).

Disordered regions lie at residues 363–387 and 402–537; these read KSQT…SPYP and FMAS…AESG. Positions 364-375 are enriched in low complexity; sequence SQTNQQQTSSNS. The span at 406-415 shows a compositional bias: polar residues; that stretch reads PSVSGNSNEL. Positions 469–482 are enriched in acidic residues; the sequence is LFGEEDEDEDDADL. Polar residues predominate over residues 486–501; it reads SNNDSTGESNANNSKG.

It belongs to the Mediator complex subunit 13 family. Component of the SRB8-11 complex, which itself associates with the Mediator complex.

It localises to the nucleus. Its function is as follows. Component of the SRB8-11 complex. The SRB8-11 complex is a regulatory module of the Mediator complex which is itself involved in regulation of basal and activated RNA polymerase II-dependent transcription. The SRB8-11 complex may be involved in the transcriptional repression of a subset of genes regulated by Mediator. It may inhibit the association of the Mediator complex with RNA polymerase II to form the holoenzyme complex. The protein is Mediator of RNA polymerase II transcription subunit 13 (SSN2) of Candida glabrata (strain ATCC 2001 / BCRC 20586 / JCM 3761 / NBRC 0622 / NRRL Y-65 / CBS 138) (Yeast).